Reading from the N-terminus, the 478-residue chain is Protein nucleotidyltransferase YdiU (478 aa).

The ATP site is built by glycine 84, glycine 86, arginine 87, lysine 107, aspartate 119, glycine 120, arginine 170, and arginine 177. Aspartate 246 functions as the Proton acceptor in the catalytic mechanism. Residues asparagine 247 and aspartate 256 each contribute to the Mg(2+) site. Residue aspartate 256 participates in ATP binding.

It belongs to the SELO family. It depends on Mg(2+) as a cofactor. Mn(2+) is required as a cofactor.

It catalyses the reaction L-seryl-[protein] + ATP = 3-O-(5'-adenylyl)-L-seryl-[protein] + diphosphate. The catalysed reaction is L-threonyl-[protein] + ATP = 3-O-(5'-adenylyl)-L-threonyl-[protein] + diphosphate. It carries out the reaction L-tyrosyl-[protein] + ATP = O-(5'-adenylyl)-L-tyrosyl-[protein] + diphosphate. The enzyme catalyses L-histidyl-[protein] + UTP = N(tele)-(5'-uridylyl)-L-histidyl-[protein] + diphosphate. It catalyses the reaction L-seryl-[protein] + UTP = O-(5'-uridylyl)-L-seryl-[protein] + diphosphate. The catalysed reaction is L-tyrosyl-[protein] + UTP = O-(5'-uridylyl)-L-tyrosyl-[protein] + diphosphate. Nucleotidyltransferase involved in the post-translational modification of proteins. It can catalyze the addition of adenosine monophosphate (AMP) or uridine monophosphate (UMP) to a protein, resulting in modifications known as AMPylation and UMPylation. The polypeptide is Protein nucleotidyltransferase YdiU (Escherichia coli O9:H4 (strain HS)).